A 352-amino-acid polypeptide reads, in one-letter code: Uroporphyrinogen decarboxylase (352 aa).

Substrate is bound by residues 27-31 (RQAGR), aspartate 77, tyrosine 154, threonine 209, and histidine 325.

The protein belongs to the uroporphyrinogen decarboxylase family. As to quaternary structure, homodimer.

Its subcellular location is the cytoplasm. The enzyme catalyses uroporphyrinogen III + 4 H(+) = coproporphyrinogen III + 4 CO2. Its pathway is porphyrin-containing compound metabolism; protoporphyrin-IX biosynthesis; coproporphyrinogen-III from 5-aminolevulinate: step 4/4. Its function is as follows. Catalyzes the decarboxylation of four acetate groups of uroporphyrinogen-III to yield coproporphyrinogen-III. This is Uroporphyrinogen decarboxylase from Legionella pneumophila (strain Corby).